Here is a 495-residue protein sequence, read N- to C-terminus: MVSEITHKSYPLHFVLFPFMAQGHMIPMVDIARLLAQRGVKITIVTTPHNAARFENVLSRAIESGLPISIVQVKLPSQEAGLPEGNETFDSLVSMELLVPFFKAVNMLEEPVQKLFEEMSPQPSCIISDFCLPYTSKIAKKFNIPKILFHGMCCFCLLCMHVLRKNREILENLKSDKEHFVVPYFPDRVEFTRPQVPMATYVPGEWHEIKEDIVEADKTSYGVIVNTYQELEPAYANDYKEARSGKAWTIGPVSLCNKVGADKAERGNKADIDQDECLKWLDSKEEGSVLYVCLGSICSLPLSQLKELGLGLEESQRPFIWVVRGWEKNKELLEWFSDSGFEERVKDRGLLIKGWSPQMLILAHHSVGGFLTHCGWNSTLEGITSGIPLLTWPLFGDQFCNQKLVVQVLKVGVSAGVEEVTNWGEEEKIGVLVDKEGVKKAVEELMGESDDAKERRKRVKELGQLAQKAVEEGGSSHSNITSLLEDIMQLAQSNN.

The Proton acceptor role is filled by His-24. An an anthocyanidin-binding site is contributed by His-24. Asp-129 serves as the catalytic Charge relay. UDP-alpha-D-glucose contacts are provided by Gln-358, His-373, Trp-376, Asn-377, Ser-378, and Glu-381. Gly-396 is a binding site for an anthocyanidin. The UDP-alpha-D-glucose site is built by Asp-397 and Gln-398.

The protein belongs to the UDP-glycosyltransferase family.

It catalyses the reaction oleanolate + UDP-alpha-D-glucose = oleanolate 3-O-beta-D-glucoside + UDP + H(+). Catalyzes the transfer of a glucose (Glc) moiety from UDP-Glc to the C-3 position of the oleanane sapogenins oleanolate and hederagenin. The monoglucosylated hederagenin 3-O-beta-D-glucoside is a feeding deterrent of the yellow-striped flea beetle (Phyllotreta nemorum). The polypeptide is UDP-glycosyltransferase 1 (Barbarea vulgaris (Yellow rocket)).